The sequence spans 454 residues: Protein disulfide-isomerase TMX3 (454 aa).

Residues 1–24 (MAAWKSWAALRLCATVVLLDMVVC) form the signal peptide. In terms of domain architecture, Thioredoxin spans 25–128 (KGFVEDLDES…KDDIIEFAHR (104 aa)). At 25–375 (KGFVEDLDES…TIVSIFKSSP (351 aa)) the chain is on the lumenal side. Residues cysteine 53 and cysteine 56 each act as nucleophile in the active site. A disulfide bridge links cysteine 53 with cysteine 56. N-linked (GlcNAc...) asparagine glycosylation is found at asparagine 258 and asparagine 313. Residues 376–396 (LMGCFLFGLPLGVISIMCYGI) traverse the membrane as a helical segment. Topologically, residues 397–454 (YTADTDGGYIEERYEVSKSENENQEQIEESKEQQEPSSGGSVVPTVQEPKDVLEKKKD) are cytoplasmic. Positions 412-454 (VSKSENENQEQIEESKEQQEPSSGGSVVPTVQEPKDVLEKKKD) are disordered. Positions 444 to 454 (EPKDVLEKKKD) are enriched in basic and acidic residues. The short motif at 451 to 454 (KKKD) is the Di-lysine motif element.

This sequence belongs to the protein disulfide isomerase family.

The protein resides in the endoplasmic reticulum membrane. The enzyme catalyses Catalyzes the rearrangement of -S-S- bonds in proteins.. Probable disulfide isomerase, which participates in the folding of proteins containing disulfide bonds. May act as a dithiol oxidase. Acts as a regulator of endoplasmic reticulum-mitochondria contact sites via its ability to regulate redox signals. In Pongo abelii (Sumatran orangutan), this protein is Protein disulfide-isomerase TMX3 (TMX3).